Reading from the N-terminus, the 201-residue chain is B-cell CLL/lymphoma 7 protein family member B-B (201 aa).

The disordered stretch occupies residues 104-201 (QSNTKVDSSS…VCTEHNSTVS (98 aa)).

The protein belongs to the BCL7 family.

This chain is B-cell CLL/lymphoma 7 protein family member B-B, found in Danio rerio (Zebrafish).